The sequence spans 1366 residues: DNA-directed RNA polymerase subunit beta' (1366 aa).

Positions methionine 1–lysine 20 are enriched in basic residues. Residues methionine 1–threonine 33 are disordered. Positions 248, 315, 322, and 325 each coordinate Zn(2+). The interval tyrosine 1291–glutamate 1366 is disordered. Residues leucine 1354–glutamate 1366 show a composition bias toward low complexity.

The protein belongs to the RNA polymerase beta' chain family. RpoC2 subfamily. In cyanobacteria the RNAP catalytic core is composed of 2 alpha, 1 beta, 1 beta', 1 gamma and 1 omega subunit. When a sigma factor is associated with the core the holoenzyme is formed, which can initiate transcription. Zn(2+) is required as a cofactor.

It carries out the reaction RNA(n) + a ribonucleoside 5'-triphosphate = RNA(n+1) + diphosphate. Its function is as follows. DNA-dependent RNA polymerase catalyzes the transcription of DNA into RNA using the four ribonucleoside triphosphates as substrates. This Prochlorococcus marinus (strain AS9601) protein is DNA-directed RNA polymerase subunit beta'.